Here is a 154-residue protein sequence, read N- to C-terminus: Heat shock protein beta-3 (154 aa).

A disordered region spans residues 48-71 (ARGAGTPQALAEDSASTEKPPGEG). The region spanning 57 to 154 (LAEDSASTEK…VEVKDSLGTK (98 aa)) is the sHSP domain.

It belongs to the small heat shock protein (HSP20) family.

The protein resides in the cytoplasm. It localises to the nucleus. In terms of biological role, inhibitor of actin polymerization. The polypeptide is Heat shock protein beta-3 (Hspb3) (Mus musculus (Mouse)).